The chain runs to 700 residues: Acetyl-coenzyme A carboxylase carboxyl transferase subunit beta, chloroplastic (700 aa).

Zn(2+) is bound by residues Cys-34, Cys-37, Cys-53, and Cys-56. The segment at 34 to 56 adopts a C4-type zinc-finger fold; it reads CENCETLIYKKSLLEQKGVCAEC. A CoA carboxyltransferase N-terminal domain is found at 445–700; the sequence is KKGRDTKDTE…ETIEIYMYGD (256 aa).

It belongs to the AccD/PCCB family. In terms of assembly, acetyl-CoA carboxylase is a heterohexamer composed of biotin carboxyl carrier protein, biotin carboxylase and 2 subunits each of ACCase subunit alpha and ACCase plastid-coded subunit beta (accD). The cofactor is Zn(2+).

The protein localises to the plastid. Its subcellular location is the chloroplast stroma. The enzyme catalyses N(6)-carboxybiotinyl-L-lysyl-[protein] + acetyl-CoA = N(6)-biotinyl-L-lysyl-[protein] + malonyl-CoA. The protein operates within lipid metabolism; malonyl-CoA biosynthesis; malonyl-CoA from acetyl-CoA: step 1/1. Functionally, component of the acetyl coenzyme A carboxylase (ACC) complex. Biotin carboxylase (BC) catalyzes the carboxylation of biotin on its carrier protein (BCCP) and then the CO(2) group is transferred by the transcarboxylase to acetyl-CoA to form malonyl-CoA. The protein is Acetyl-coenzyme A carboxylase carboxyl transferase subunit beta, chloroplastic of Cryptomeria japonica (Japanese cedar).